A 193-amino-acid polypeptide reads, in one-letter code: Transcriptional repressor NrdR (193 aa).

A zinc finger lies at Cys3–Cys34. The ATP-cone domain occupies Leu49 to Asp139. Positions Asp150–Ala193 are disordered.

Belongs to the NrdR family. It depends on Zn(2+) as a cofactor.

Negatively regulates transcription of bacterial ribonucleotide reductase nrd genes and operons by binding to NrdR-boxes. This Methylobacterium nodulans (strain LMG 21967 / CNCM I-2342 / ORS 2060) protein is Transcriptional repressor NrdR.